Consider the following 873-residue polypeptide: E3 ubiquitin-protein ligase UPL5 (873 aa).

The span at 1 to 19 (MTLSRSSADDSTNNANRSY) shows a compositional bias: polar residues. Disordered regions lie at residues 1–37 (MTLSRSSADDSTNNANRSYSAVAGTDNKRKRDEDSSD) and 70–90 (RSGENSRSLSSSGECSSSNRP). The Ubiquitin-like domain maps to 95 to 171 (LQIFVRMMSG…LQLVARMQST (77 aa)). The C-type lectin domain occupies 272 to 296 (CLPIVLEFCKLLRKVCPDQKLYVTC). The region spanning 532–873 (SPEALHGGLF…DHVSSSFGKW (342 aa)) is the HECT domain. C839 (glycyl thioester intermediate) is an active-site residue.

This sequence belongs to the UPL family. Interacts with WRKY53.

Its subcellular location is the cytoplasm. It carries out the reaction S-ubiquitinyl-[E2 ubiquitin-conjugating enzyme]-L-cysteine + [acceptor protein]-L-lysine = [E2 ubiquitin-conjugating enzyme]-L-cysteine + N(6)-ubiquitinyl-[acceptor protein]-L-lysine.. The protein operates within protein modification; protein ubiquitination. Functionally, E3 ubiquitin protein ligase that regulates leaf senescence through ubiquitination and subsequent degradation of WRKY53. In Arabidopsis thaliana (Mouse-ear cress), this protein is E3 ubiquitin-protein ligase UPL5 (UPL5).